We begin with the raw amino-acid sequence, 161 residues long: Shikimate kinase (161 aa).

10–15 (GAGKTT) contributes to the ATP binding site. Residue Thr-14 participates in Mg(2+) binding. The substrate site is built by Asp-28, Arg-52, and Gly-74. ATP is bound at residue Arg-114. Arg-132 contributes to the substrate binding site.

The protein belongs to the shikimate kinase family. Monomer. It depends on Mg(2+) as a cofactor.

It localises to the cytoplasm. It catalyses the reaction shikimate + ATP = 3-phosphoshikimate + ADP + H(+). It participates in metabolic intermediate biosynthesis; chorismate biosynthesis; chorismate from D-erythrose 4-phosphate and phosphoenolpyruvate: step 5/7. Its function is as follows. Catalyzes the specific phosphorylation of the 3-hydroxyl group of shikimic acid using ATP as a cosubstrate. The polypeptide is Shikimate kinase (Streptococcus gordonii (strain Challis / ATCC 35105 / BCRC 15272 / CH1 / DL1 / V288)).